Reading from the N-terminus, the 946-residue chain is Bifunctional glutamine synthetase adenylyltransferase/adenylyl-removing enzyme (946 aa).

Residues 1–440 (MKPLSSPLQQ…VFNELIGDDE (440 aa)) form an adenylyl removase region. Positions 449 to 946 (SEQWRELWQD…ASWQKWLVEE (498 aa)) are adenylyl transferase.

It belongs to the GlnE family. Mg(2+) serves as cofactor.

The catalysed reaction is [glutamine synthetase]-O(4)-(5'-adenylyl)-L-tyrosine + phosphate = [glutamine synthetase]-L-tyrosine + ADP. It carries out the reaction [glutamine synthetase]-L-tyrosine + ATP = [glutamine synthetase]-O(4)-(5'-adenylyl)-L-tyrosine + diphosphate. In terms of biological role, involved in the regulation of glutamine synthetase GlnA, a key enzyme in the process to assimilate ammonia. When cellular nitrogen levels are high, the C-terminal adenylyl transferase (AT) inactivates GlnA by covalent transfer of an adenylyl group from ATP to specific tyrosine residue of GlnA, thus reducing its activity. Conversely, when nitrogen levels are low, the N-terminal adenylyl removase (AR) activates GlnA by removing the adenylyl group by phosphorolysis, increasing its activity. The regulatory region of GlnE binds the signal transduction protein PII (GlnB) which indicates the nitrogen status of the cell. In Escherichia coli O6:H1 (strain CFT073 / ATCC 700928 / UPEC), this protein is Bifunctional glutamine synthetase adenylyltransferase/adenylyl-removing enzyme.